The chain runs to 120 residues: Large ribosomal subunit protein uL18 (120 aa).

The span at 1 to 10 (MKLNRVESTR) shows a compositional bias: basic and acidic residues. The tract at residues 1-26 (MKLNRVESTRSRHRRVRRKVGGTGDR) is disordered. The span at 11–20 (SRHRRVRRKV) shows a compositional bias: basic residues.

Belongs to the universal ribosomal protein uL18 family. As to quaternary structure, part of the 50S ribosomal subunit; part of the 5S rRNA/L5/L18/L25 subcomplex. Contacts the 5S and 23S rRNAs.

Its function is as follows. This is one of the proteins that bind and probably mediate the attachment of the 5S RNA into the large ribosomal subunit, where it forms part of the central protuberance. This Cyanothece sp. (strain PCC 7425 / ATCC 29141) protein is Large ribosomal subunit protein uL18.